A 326-amino-acid chain; its full sequence is Regulation of nuclear pre-mRNA domain-containing protein 1B (326 aa).

Ser2 is modified (N-acetylserine). One can recognise a CID domain in the interval 2 to 133 (SSFSESALEK…QLKLSMEDSK (132 aa)). Residues 128–144 (SMEDSKSPPPKAAEEKK) are compositionally biased toward basic and acidic residues. A disordered region spans residues 128–148 (SMEDSKSPPPKAAEEKKSLKR). Residues Ser132 and Ser134 each carry the phosphoserine modification. Tyr161 carries the phosphotyrosine modification. 2 positions are modified to phosphoserine: Ser166 and Ser299.

Belongs to the UPF0400 (RTT103) family. Homodimer. May form a heterodimer with RPRD1A. Associates with RPAP2. Associates with the RNA polymerase II complex. Widely expressed in the adult with highest levels in liver, colon, prostate and uterus and lowest levels in heart and kidney. Not detected in rectum.

It is found in the nucleus. Functionally, interacts with phosphorylated C-terminal heptapeptide repeat domain (CTD) of the largest RNA polymerase II subunit POLR2A, and participates in dephosphorylation of the CTD by RPAP2. Transcriptional regulator which enhances expression of CCND1. Promotes binding of RNA polymerase II to the CCDN1 promoter and to the termination region before the poly-A site but decreases its binding after the poly-A site. Prevents RNA polymerase II from reading through the 3' end termination site and may allow it to be recruited back to the promoter through promotion of the formation of a chromatin loop. Also enhances the transcription of a number of other cell cycle-related genes including CDK2, CDK4, CDK6 and cyclin-E but not CDKN1A, CDKN1B or cyclin-A. Promotes cell proliferation. This chain is Regulation of nuclear pre-mRNA domain-containing protein 1B (Rprd1b), found in Mus musculus (Mouse).